Here is a 247-residue protein sequence, read N- to C-terminus: Trypsin-4 (247 aa).

Residues 1 to 15 form the signal peptide; the sequence is MKISIFFAFLGAAVA. A propeptide spans 16 to 23 (activation peptide); sequence LPVNDDDK. The 222-residue stretch at 24-245 folds into the Peptidase S1 domain; sequence IVGGYTCPKH…YLSWIQETMA (222 aa). Intrachain disulfides connect C30-C161, C49-C65, C133-C234, C140-C207, C172-C186, and C197-C221. The active-site Charge relay system is the H64. Ca(2+) is bound by residues E76, N78, V81, and E86. The Charge relay system role is filled by D108. S201 serves as the catalytic Charge relay system.

This sequence belongs to the peptidase S1 family. Ca(2+) is required as a cofactor. Post-translationally, proteolytically cleaved and activated by an autocatalytic mechanism. Cleavage by CTRC inhibits autoactivation.

The protein resides in the secreted. The protein localises to the extracellular space. It catalyses the reaction Preferential cleavage: Arg-|-Xaa, Lys-|-Xaa.. Its activity is regulated as follows. Activated by autocatalytic cleavage. Cleavage by CTRC inhibits autoactivation. Functionally, serine protease capable of autoactivation. This Rattus norvegicus (Rat) protein is Trypsin-4.